We begin with the raw amino-acid sequence, 345 residues long: S-adenosylmethionine:tRNA ribosyltransferase-isomerase (345 aa).

It belongs to the QueA family. In terms of assembly, monomer.

The protein localises to the cytoplasm. The catalysed reaction is 7-aminomethyl-7-carbaguanosine(34) in tRNA + S-adenosyl-L-methionine = epoxyqueuosine(34) in tRNA + adenine + L-methionine + 2 H(+). The protein operates within tRNA modification; tRNA-queuosine biosynthesis. Functionally, transfers and isomerizes the ribose moiety from AdoMet to the 7-aminomethyl group of 7-deazaguanine (preQ1-tRNA) to give epoxyqueuosine (oQ-tRNA). The polypeptide is S-adenosylmethionine:tRNA ribosyltransferase-isomerase (Finegoldia magna (strain ATCC 29328 / DSM 20472 / WAL 2508) (Peptostreptococcus magnus)).